Consider the following 424-residue polypeptide: GTPase Obg (424 aa).

In terms of domain architecture, Obg spans 1–158 (MFIDTAKILV…RMINLEIKLL (158 aa)). The OBG-type G domain maps to 159–331 (ADVGLIGFPN…LIKEVTRQLS (173 aa)). Residues 165 to 172 (GFPNVGKS), 190 to 194 (FTTLK), 212 to 215 (DIPG), 282 to 285 (NKID), and 312 to 314 (SAA) contribute to the GTP site. Mg(2+) contacts are provided by serine 172 and threonine 192. The OCT domain occupies 345 to 424 (RFMPEEKRFT…LNDFEFDFLL (80 aa)).

It belongs to the TRAFAC class OBG-HflX-like GTPase superfamily. OBG GTPase family. As to quaternary structure, monomer. The cofactor is Mg(2+).

The protein localises to the cytoplasm. In terms of biological role, an essential GTPase which binds GTP, GDP and possibly (p)ppGpp with moderate affinity, with high nucleotide exchange rates and a fairly low GTP hydrolysis rate. Plays a role in control of the cell cycle, stress response, ribosome biogenesis and in those bacteria that undergo differentiation, in morphogenesis control. This chain is GTPase Obg, found in Clostridium novyi (strain NT).